A 406-amino-acid chain; its full sequence is Arginine biosynthesis bifunctional protein ArgJ (406 aa).

Substrate is bound by residues T154, K180, T191, E278, N401, and T406. T191 acts as the Nucleophile in catalysis.

Belongs to the ArgJ family. Heterotetramer of two alpha and two beta chains.

Its subcellular location is the cytoplasm. The catalysed reaction is N(2)-acetyl-L-ornithine + L-glutamate = N-acetyl-L-glutamate + L-ornithine. The enzyme catalyses L-glutamate + acetyl-CoA = N-acetyl-L-glutamate + CoA + H(+). Its pathway is amino-acid biosynthesis; L-arginine biosynthesis; L-ornithine and N-acetyl-L-glutamate from L-glutamate and N(2)-acetyl-L-ornithine (cyclic): step 1/1. It participates in amino-acid biosynthesis; L-arginine biosynthesis; N(2)-acetyl-L-ornithine from L-glutamate: step 1/4. Catalyzes two activities which are involved in the cyclic version of arginine biosynthesis: the synthesis of N-acetylglutamate from glutamate and acetyl-CoA as the acetyl donor, and of ornithine by transacetylation between N(2)-acetylornithine and glutamate. The polypeptide is Arginine biosynthesis bifunctional protein ArgJ (Gloeobacter violaceus (strain ATCC 29082 / PCC 7421)).